The primary structure comprises 192 residues: Molybdenum cofactor guanylyltransferase (192 aa).

GTP-binding positions include 10–12, lysine 23, asparagine 51, aspartate 69, and aspartate 99; that span reads LAG. Aspartate 99 contributes to the Mg(2+) binding site.

It belongs to the MobA family. Monomer. Mg(2+) is required as a cofactor.

The protein resides in the cytoplasm. It carries out the reaction Mo-molybdopterin + GTP + H(+) = Mo-molybdopterin guanine dinucleotide + diphosphate. Functionally, transfers a GMP moiety from GTP to Mo-molybdopterin (Mo-MPT) cofactor (Moco or molybdenum cofactor) to form Mo-molybdopterin guanine dinucleotide (Mo-MGD) cofactor. The chain is Molybdenum cofactor guanylyltransferase from Haemophilus influenzae (strain ATCC 51907 / DSM 11121 / KW20 / Rd).